A 364-amino-acid polypeptide reads, in one-letter code: Protein-glutamate methylesterase/protein-glutamine glutaminase (364 aa).

Residues 5–123 form the Response regulatory domain; that stretch reads RVLVVDDTIL…PAANKAALAN (119 aa). Position 56 is a 4-aspartylphosphate (D56). In terms of domain architecture, CheB-type methylesterase spans 174–364; sequence EIVVIGISTG…QEIVHTVKLY (191 aa). Active-site residues include S181, H208, and D306.

The protein belongs to the CheB family. Phosphorylated by CheA. Phosphorylation of the N-terminal regulatory domain activates the methylesterase activity.

The protein localises to the cytoplasm. The enzyme catalyses [protein]-L-glutamate 5-O-methyl ester + H2O = L-glutamyl-[protein] + methanol + H(+). It carries out the reaction L-glutaminyl-[protein] + H2O = L-glutamyl-[protein] + NH4(+). Involved in chemotaxis. Part of a chemotaxis signal transduction system that modulates chemotaxis in response to various stimuli. Catalyzes the demethylation of specific methylglutamate residues introduced into the chemoreceptors (methyl-accepting chemotaxis proteins or MCP) by CheR. Also mediates the irreversible deamidation of specific glutamine residues to glutamic acid. The chain is Protein-glutamate methylesterase/protein-glutamine glutaminase from Desulfotalea psychrophila (strain LSv54 / DSM 12343).